The following is a 462-amino-acid chain: Gastric inhibitory polypeptide receptor (462 aa).

Residues 1 to 18 form the signal peptide; it reads MPLRPRLLLLCLWGLLLQ. Topologically, residues 19–135 are extracellular; that stretch reads QAETDSEGQT…DQRLILERLQ (117 aa). Intrachain disulfides connect C43–C67, C58–C100, and C81–C115. N-linked (GlcNAc...) asparagine glycans are attached at residues N59 and N74. Residues 136 to 158 traverse the membrane as a helical segment; that stretch reads VVYTVGYSLSLGTLLLALLILSL. Over 159 to 166 the chain is Cytoplasmic; it reads FRRLHCTR. A helical transmembrane segment spans residues 167–186; that stretch reads NYIHMNVFLSFMLRAVAILT. Residues 187 to 214 lie on the Extracellular side of the membrane; sequence RDRLLPTLGPYPGDRTLTLRNQALAACR. Residues 215 to 239 form a helical membrane-spanning segment; sequence TAQIVTQYCVGANYTWLLVEGVYLH. Residues 240 to 251 lie on the Cytoplasmic side of the membrane; it reads HLLVIVGGSEKG. Residues 252-275 form a helical membrane-spanning segment; sequence HFRCYLLLGWGAPALFVIPWVIVR. At 276–290 the chain is on the extracellular side; it reads YLLENTQCWERNEVK. Residues 291-316 form a helical membrane-spanning segment; sequence AIWWIIRTPILITILINFFIFIRILG. Topologically, residues 317–338 are cytoplasmic; it reads ILVSKLRTRQMRCPDYRLRLAR. The chain crosses the membrane as a helical span at residues 339 to 359; that stretch reads STLTLVPLLGVHEVVFAPVTE. The Extracellular portion of the chain corresponds to 360 to 374; sequence EQAEGTLRFAKLAFE. Residues 375–395 form a helical membrane-spanning segment; the sequence is IFLSSFQGFLVSVLYCFINKE. Topologically, residues 396 to 462 are cytoplasmic; that stretch reads VQSEIRRSWR…PGEEVLESYC (67 aa). The segment at 421-462 is disordered; the sequence is HAELGPQALPSRSAPREVPITGSTLPSGPLHGPGEEVLESYC.

The protein belongs to the G-protein coupled receptor 2 family. As to quaternary structure, may form homodimers and heterodimers with GLP1R. N-glycosylation is required for cell surface expression and lengthens receptor half-life by preventing degradation in the ER. As to expression, widely distributed including pancreatic islets, brain and various peripheral tissues.

The protein resides in the cell membrane. Its function is as follows. This is a receptor for GIP. The activity of this receptor is mediated by G proteins which activate adenylyl cyclase. The protein is Gastric inhibitory polypeptide receptor (GIPR) of Mesocricetus auratus (Golden hamster).